A 416-amino-acid polypeptide reads, in one-letter code: Tyrosine--tRNA ligase (416 aa).

Tyr-34 contacts L-tyrosine. A 'HIGH' region motif is present at residues Pro-39–His-48. 2 residues coordinate L-tyrosine: Tyr-165 and Gln-169. Positions Lys-227–Thr-231 match the 'KMSKS' region motif. Position 230 (Lys-230) interacts with ATP. The region spanning Lys-349 to Lys-416 is the S4 RNA-binding domain.

It belongs to the class-I aminoacyl-tRNA synthetase family. TyrS type 1 subfamily. In terms of assembly, homodimer.

The protein resides in the cytoplasm. It carries out the reaction tRNA(Tyr) + L-tyrosine + ATP = L-tyrosyl-tRNA(Tyr) + AMP + diphosphate + H(+). In terms of biological role, catalyzes the attachment of tyrosine to tRNA(Tyr) in a two-step reaction: tyrosine is first activated by ATP to form Tyr-AMP and then transferred to the acceptor end of tRNA(Tyr). This Ligilactobacillus salivarius (strain UCC118) (Lactobacillus salivarius) protein is Tyrosine--tRNA ligase.